A 268-amino-acid polypeptide reads, in one-letter code: Hydroxyethylthiazole kinase (268 aa).

A substrate-binding site is contributed by methionine 46. The ATP site is built by arginine 122 and threonine 168. Glycine 195 provides a ligand contact to substrate.

Belongs to the Thz kinase family. Mg(2+) serves as cofactor.

The catalysed reaction is 5-(2-hydroxyethyl)-4-methylthiazole + ATP = 4-methyl-5-(2-phosphooxyethyl)-thiazole + ADP + H(+). It participates in cofactor biosynthesis; thiamine diphosphate biosynthesis; 4-methyl-5-(2-phosphoethyl)-thiazole from 5-(2-hydroxyethyl)-4-methylthiazole: step 1/1. Functionally, catalyzes the phosphorylation of the hydroxyl group of 4-methyl-5-beta-hydroxyethylthiazole (THZ). The protein is Hydroxyethylthiazole kinase of Desulfatibacillum aliphaticivorans.